The following is a 372-amino-acid chain: Methylthioribose-1-phosphate isomerase (372 aa).

Asp-252 functions as the Proton donor in the catalytic mechanism.

The protein belongs to the eIF-2B alpha/beta/delta subunits family. MtnA subfamily.

It localises to the cytoplasm. The protein localises to the nucleus. It catalyses the reaction 5-(methylsulfanyl)-alpha-D-ribose 1-phosphate = 5-(methylsulfanyl)-D-ribulose 1-phosphate. Its pathway is amino-acid biosynthesis; L-methionine biosynthesis via salvage pathway; L-methionine from S-methyl-5-thio-alpha-D-ribose 1-phosphate: step 1/6. Its function is as follows. Catalyzes the interconversion of methylthioribose-1-phosphate (MTR-1-P) into methylthioribulose-1-phosphate (MTRu-1-P). The sequence is that of Methylthioribose-1-phosphate isomerase from Yarrowia lipolytica (strain CLIB 122 / E 150) (Yeast).